The chain runs to 401 residues: Type 3 secretion system translocon protein SctE (401 aa).

Residues 129-160 (IQRLHEQNMKKIEENQEKIKETEENAKQVKKS) adopt a coiled-coil conformation. 2 helical membrane-spanning segments follow: residues 166–186 (IFGWLIAIASVVIGAIMVASG) and 225–245 (LGPILTAIEVALTVVSTVMTF). Positions 345–379 (LALNKADMAALQSIIDRLKEELSHLSESHRQVMEL) form a coiled coil.

The protein belongs to the SctE/SipB/YopB family. As to quaternary structure, the core secretion machinery of the T3SS is composed of approximately 20 different proteins, including cytoplasmic components, a base, an export apparatus and a needle. This subunit is involved in the formation of a pore, called the translocon, in host membrane. Interacts with YopD/SctB. Together with YopD/SctB, forms a multimeric integral membrane complex with a mass of between 500 and 700 kDa.

Its subcellular location is the secreted. The protein localises to the host membrane. In terms of biological role, component of the type III secretion system (T3SS), also called injectisome, which is used to inject bacterial effector proteins into eukaryotic host cells. YopB/SctE and YopD/SctB are inserted into the host membrane where they form a pore and allow the translocation of effector proteins into the cytosol of target cells. Is an essential virulence determinant. Required for YopE translocation. Essential for the establishment of Yersinia infections in a mouse model system, but not for the targeting of effector Yops. May modulate the host's immune response at a distance from the site of infection. This Yersinia enterocolitica protein is Type 3 secretion system translocon protein SctE.